A 201-amino-acid chain; its full sequence is UPF0177 protein YajF (201 aa).

The next 5 membrane-spanning stretches (helical) occupy residues 10 to 30 (TVIL…YVEY), 44 to 64 (ITVN…MLGI), 82 to 102 (ILIL…SQFI), 119 to 139 (VMGS…APIL), and 159 to 179 (FVFS…VFLI).

This sequence belongs to the UPF0177 family.

Its subcellular location is the cell membrane. This is UPF0177 protein YajF (yajF) from Lactococcus lactis subsp. lactis (strain IL1403) (Streptococcus lactis).